Here is a 442-residue protein sequence, read N- to C-terminus: Threonine/serine transporter TdcC (442 aa).

Helical transmembrane passes span 21 to 41, 44 to 64, 96 to 116, 139 to 159, 162 to 182, 206 to 226, 258 to 278, 312 to 332, 364 to 384, 388 to 408, and 422 to 442; these read TTWTLGLFGTAIGAGVLFFPI, GFGGLIPILIMLVLAYPIAFL, GVVITFLYFFAICPLLWIYGV, VVALALLLLMAVVIYFGKDLM, VMSFLVFPFIACLVLISLSLI, ILVTVWLGISIMVFSFNFSPI, ASILMVAVVMFFAFSCLFTLS, ITLEYAASLIALVAIFKSFFG, LISMFFIMGSTWLVAYINPNI, IEAMGAPIIASLLCLLPMYAI, and ENYFVTIVGLLTIFNIVYKLL.

Belongs to the amino acid/polyamine transporter 2 family. SdaC/TdcC subfamily.

The protein localises to the cell inner membrane. It catalyses the reaction L-threonine(in) + H(+)(in) = L-threonine(out) + H(+)(out). The catalysed reaction is L-serine(in) + H(+)(in) = L-serine(out) + H(+)(out). Involved in the import of threonine and serine into the cell, with the concomitant import of a proton (symport system). The chain is Threonine/serine transporter TdcC from Yersinia enterocolitica serotype O:8 / biotype 1B (strain NCTC 13174 / 8081).